The sequence spans 42 residues: Serine protease inhibitor 8 (42 aa).

It belongs to the protease inhibitor I3 (leguminous Kunitz-type inhibitor) family. In terms of tissue distribution, cortex of potato tuber.

Potent inhibitor of animal pancreatic trypsin (serine protease). The protein is Serine protease inhibitor 8 of Solanum tuberosum (Potato).